Reading from the N-terminus, the 353-residue chain is BLOC-1-related complex subunit 6 (353 aa).

A disordered region spans residues 23-194 (AIFGDGPGQT…SGAGGGRRAT (172 aa)). A compositionally biased stretch (basic and acidic residues) spans 102–126 (FDLHGSSRRKDPEPPEAKPESERVC). Phosphoserine occurs at positions 130 and 166. Gly residues predominate over residues 172 to 191 (GACGGPASSGGAESGAGGGR). T194 carries the phosphothreonine modification. S197 is modified (phosphoserine). Positions 225–253 (LSGAPQPPPPAPTRPCSAPTPTPAIPPID) are disordered. Pro residues predominate over residues 229–253 (PQPPPPAPTRPCSAPTPTPAIPPID).

It belongs to the BORCS6 family. In terms of assembly, component of the BLOC-one-related complex (BORC) which is composed of BLOC1S1, BLOC1S2, BORCS5, BORCS6, BORCS7, BORCS8, KXD1 and SNAPIN.

It localises to the lysosome membrane. Its function is as follows. As part of the BORC complex may play a role in lysosomes movement and localization at the cell periphery. Associated with the cytosolic face of lysosomes, the BORC complex may recruit ARL8B and couple lysosomes to microtubule plus-end-directed kinesin motor. This is BLOC-1-related complex subunit 6 from Bos taurus (Bovine).